A 212-amino-acid chain; its full sequence is Adenine phosphoribosyltransferase (212 aa).

This sequence belongs to the purine/pyrimidine phosphoribosyltransferase family. As to quaternary structure, homodimer.

It is found in the cytoplasm. The enzyme catalyses AMP + diphosphate = 5-phospho-alpha-D-ribose 1-diphosphate + adenine. It functions in the pathway purine metabolism; AMP biosynthesis via salvage pathway; AMP from adenine: step 1/1. In terms of biological role, catalyzes a salvage reaction resulting in the formation of AMP, that is energically less costly than de novo synthesis. This chain is Adenine phosphoribosyltransferase, found in Mycobacterium tuberculosis (strain CDC 1551 / Oshkosh).